A 393-amino-acid polypeptide reads, in one-letter code: Selenide, water dikinase (393 aa).

Residues 1–21 form a disordered region; sequence MSEKEGKVIPETNGMKRPRFD. Cys42 is a catalytic residue. Residues Lys45, 68–70, Asp93, Asp116, and 167–170 each bind ATP; these read GMD and GGQT. Asp70 is a Mg(2+) binding site. Asp116 provides a ligand contact to Mg(2+). Asp273 provides a ligand contact to Mg(2+).

This sequence belongs to the selenophosphate synthase 1 family. Class I subfamily. In terms of assembly, homodimer. It depends on Mg(2+) as a cofactor.

It carries out the reaction hydrogenselenide + ATP + H2O = selenophosphate + AMP + phosphate + 2 H(+). Functionally, synthesizes selenophosphate from selenide and ATP. In Trypanosoma brucei brucei (strain 927/4 GUTat10.1), this protein is Selenide, water dikinase.